A 39-amino-acid chain; its full sequence is Potassium channel toxin alpha-KTx 2.16 (39 aa).

3 disulfides stabilise this stretch: cysteine 7–cysteine 29, cysteine 13–cysteine 34, and cysteine 17–cysteine 36. An Isoleucine amide modification is found at isoleucine 39.

This sequence belongs to the short scorpion toxin superfamily. Potassium channel inhibitor family. Alpha-KTx 02 subfamily. As to expression, expressed by the venom gland.

It is found in the secreted. Its function is as follows. Blocks human voltage-gated potassium channels Kv1.2/KCNA2 (IC(50)=0.7 nM), Kv1.3/KCNA3 (IC(50)=26.2 nM) and blocks intermediate conductance calcium-activated potassium channel KCa3.1/KCNN4 (IC(50)=56 nM). The chain is Potassium channel toxin alpha-KTx 2.16 from Centruroides tecomanus (Scorpion).